Consider the following 506-residue polypeptide: Glycerol kinase (506 aa).

T14 is an ADP binding site. Residues T14, T15, and S16 each coordinate ATP. A sn-glycerol 3-phosphate-binding site is contributed by T14. R18 serves as a coordination point for ADP. Sn-glycerol 3-phosphate-binding residues include R84, E85, and Y136. Glycerol is bound by residues R84, E85, and Y136. H232 carries the phosphohistidine; by HPr modification. D246 is a sn-glycerol 3-phosphate binding site. Positions 246 and 247 each coordinate glycerol. Residues T268 and G311 each coordinate ADP. ATP is bound by residues T268, G311, Q315, and G412. Residues G412 and N416 each coordinate ADP.

Belongs to the FGGY kinase family. In terms of assembly, homotetramer and homodimer (in equilibrium). In terms of processing, the phosphoenolpyruvate-dependent sugar phosphotransferase system (PTS), including enzyme I, and histidine-containing protein (HPr) are required for the phosphorylation of His-232, which leads to the activation of the enzyme.

The enzyme catalyses glycerol + ATP = sn-glycerol 3-phosphate + ADP + H(+). Its pathway is polyol metabolism; glycerol degradation via glycerol kinase pathway; sn-glycerol 3-phosphate from glycerol: step 1/1. Its activity is regulated as follows. Activated by phosphorylation and inhibited by fructose 1,6-bisphosphate (FBP). In terms of biological role, key enzyme in the regulation of glycerol uptake and metabolism. Catalyzes the phosphorylation of glycerol to yield sn-glycerol 3-phosphate. The polypeptide is Glycerol kinase (Enterococcus casseliflavus (Enterococcus flavescens)).